The following is a 157-amino-acid chain: 2-C-methyl-D-erythritol 2,4-cyclodiphosphate synthase (157 aa).

2 residues coordinate a divalent metal cation: aspartate 8 and histidine 10. 4-CDP-2-C-methyl-D-erythritol 2-phosphate-binding positions include 8 to 10 and 34 to 35; these read DVH and HS. Histidine 42 is an a divalent metal cation binding site. 4-CDP-2-C-methyl-D-erythritol 2-phosphate-binding positions include 56 to 58, 61 to 65, 132 to 135, phenylalanine 139, and arginine 142; these read DIG, FPDTD, and TTTE.

Belongs to the IspF family. Homotrimer. It depends on a divalent metal cation as a cofactor.

The enzyme catalyses 4-CDP-2-C-methyl-D-erythritol 2-phosphate = 2-C-methyl-D-erythritol 2,4-cyclic diphosphate + CMP. It functions in the pathway isoprenoid biosynthesis; isopentenyl diphosphate biosynthesis via DXP pathway; isopentenyl diphosphate from 1-deoxy-D-xylulose 5-phosphate: step 4/6. Involved in the biosynthesis of isopentenyl diphosphate (IPP) and dimethylallyl diphosphate (DMAPP), two major building blocks of isoprenoid compounds. Catalyzes the conversion of 4-diphosphocytidyl-2-C-methyl-D-erythritol 2-phosphate (CDP-ME2P) to 2-C-methyl-D-erythritol 2,4-cyclodiphosphate (ME-CPP) with a corresponding release of cytidine 5-monophosphate (CMP). The sequence is that of 2-C-methyl-D-erythritol 2,4-cyclodiphosphate synthase from Geobacter metallireducens (strain ATCC 53774 / DSM 7210 / GS-15).